Consider the following 193-residue polypeptide: Phosphoheptose isomerase (193 aa).

One can recognise an SIS domain in the interval 37–193 (LADSFKAGGK…QLIEKEMVKA (157 aa)). A substrate-binding site is contributed by 52–54 (NGG). Histidine 61 and glutamate 65 together coordinate Zn(2+). Substrate contacts are provided by residues glutamate 65, 93 to 94 (ND), 119 to 121 (STS), serine 124, and glutamine 172. Residues glutamine 172 and histidine 180 each contribute to the Zn(2+) site.

It belongs to the SIS family. GmhA subfamily. In terms of assembly, homotetramer. Zn(2+) is required as a cofactor.

The protein localises to the cytoplasm. It catalyses the reaction 2 D-sedoheptulose 7-phosphate = D-glycero-alpha-D-manno-heptose 7-phosphate + D-glycero-beta-D-manno-heptose 7-phosphate. It participates in carbohydrate biosynthesis; D-glycero-D-manno-heptose 7-phosphate biosynthesis; D-glycero-alpha-D-manno-heptose 7-phosphate and D-glycero-beta-D-manno-heptose 7-phosphate from sedoheptulose 7-phosphate: step 1/1. Its pathway is bacterial outer membrane biogenesis; LPS core biosynthesis. Catalyzes the isomerization of sedoheptulose 7-phosphate in D-glycero-D-manno-heptose 7-phosphate. This Yersinia pestis protein is Phosphoheptose isomerase.